Consider the following 243-residue polypeptide: Thiocyanate hydrolase subunit gamma (243 aa).

The Co(3+) site is built by Cys128, Cys131, Ser132, and Cys133. Cys131 bears the Cysteine sulfinic acid (-SO2H) mark. Position 133 is a cysteine sulfenic acid (-SOH) (Cys133).

This sequence belongs to the nitrile hydratase subunit alpha family. In terms of assembly, heterododecamer consisting of 4 alpha, 4 beta, and 4 gamma subunits. It depends on Co(3+) as a cofactor.

The catalysed reaction is thiocyanate + H2O + 2 H(+) = carbonyl sulfide + NH4(+). Its pathway is organosulfur degradation; thiocyanate degradation. Its function is as follows. Involved in the degradation of thiocyanate. This chain is Thiocyanate hydrolase subunit gamma (scnC), found in Thiobacillus thioparus.